We begin with the raw amino-acid sequence, 1343 residues long: DNA-directed RNA polymerase subunit beta (1343 aa).

This sequence belongs to the RNA polymerase beta chain family. As to quaternary structure, the RNAP catalytic core consists of 2 alpha, 1 beta, 1 beta' and 1 omega subunit. When a sigma factor is associated with the core the holoenzyme is formed, which can initiate transcription.

It carries out the reaction RNA(n) + a ribonucleoside 5'-triphosphate = RNA(n+1) + diphosphate. DNA-dependent RNA polymerase catalyzes the transcription of DNA into RNA using the four ribonucleoside triphosphates as substrates. In Buchnera aphidicola subsp. Cinara cedri (strain Cc), this protein is DNA-directed RNA polymerase subunit beta.